The sequence spans 1023 residues: Presequence protease, mitochondrial (1023 aa).

A mitochondrion-targeting transit peptide spans 1–62; sequence MFRQSKTIIT…PDLFLTAVKL (62 aa). Residue H99 coordinates Zn(2+). E102 (proton acceptor) is an active-site residue. Residues H103 and E200 each contribute to the Zn(2+) site. The cysteines at positions 114 and 551 are disulfide-linked.

This sequence belongs to the peptidase M16 family. PreP subfamily. Monomer and homodimer; homodimerization is induced by binding of the substrate. It depends on Zn(2+) as a cofactor. A disulfide bond locks the enzyme in the closed conformation preventing substrate entry into the catalytic chamber.

The protein resides in the mitochondrion matrix. Mainly exists in a closed and catalytically competent conformation but a closed-to-open switch allows substrate entry into the catalytic chamber. Substrate binding induces closure and dimerization. A disulfide bond may lock the enzyme in a closed conformation preventing substrate entry into the catalytic chamber, participating in redox regulation of the enzyme. Inhibited by metal-chelating agents. Inhibited by nickel and zinc excess, and slightly activated by manganese. In terms of biological role, metalloendopeptidase of the mitochondrial matrix that functions in peptide cleavage and degradation rather than in protein processing. Has an ATP-independent activity. Specifically cleaves peptides in the range of 5 to 65 residues. Shows a preference for cleavage after small polar residues and before basic residues, but without any positional preference. Degrades the transit peptides of mitochondrial proteins after their cleavage. Also degrades other unstructured peptides. The polypeptide is Presequence protease, mitochondrial (pitrm1) (Danio rerio (Zebrafish)).